Consider the following 100-residue polypeptide: Small ribosomal subunit protein uS14c (100 aa).

Belongs to the universal ribosomal protein uS14 family. Part of the 30S ribosomal subunit.

The protein resides in the plastid. Its subcellular location is the chloroplast. In terms of biological role, binds 16S rRNA, required for the assembly of 30S particles. This is Small ribosomal subunit protein uS14c from Helianthus annuus (Common sunflower).